The primary structure comprises 222 residues: Eukaryotic translation initiation factor 3 subunit K (222 aa).

The PCI domain occupies 46–208 (YDLEANLAVL…KIKTKNITEK (163 aa)).

The protein belongs to the eIF-3 subunit K family. As to quaternary structure, component of the eukaryotic translation initiation factor 3 (eIF-3) complex. The eIF-3 complex interacts with pix.

The protein resides in the cytoplasm. In terms of biological role, component of the eukaryotic translation initiation factor 3 (eIF-3) complex, which is involved in protein synthesis of a specialized repertoire of mRNAs and, together with other initiation factors, stimulates binding of mRNA and methionyl-tRNAi to the 40S ribosome. The eIF-3 complex specifically targets and initiates translation of a subset of mRNAs involved in cell proliferation. The protein is Eukaryotic translation initiation factor 3 subunit K of Drosophila sechellia (Fruit fly).